Here is a 554-residue protein sequence, read N- to C-terminus: Glucose-6-phosphate isomerase (554 aa).

Glu-358 functions as the Proton donor in the catalytic mechanism. Catalysis depends on residues His-389 and Lys-515. A compositionally biased stretch (polar residues) spans 527–540 (SDGSPQRQSDSSTD). A disordered region spans residues 527–554 (SDGSPQRQSDSSTDALVRRYRTQRGRTG). The segment covering 544–554 (RRYRTQRGRTG) has biased composition (basic residues).

The protein belongs to the GPI family.

The protein resides in the cytoplasm. It carries out the reaction alpha-D-glucose 6-phosphate = beta-D-fructose 6-phosphate. It functions in the pathway carbohydrate biosynthesis; gluconeogenesis. It participates in carbohydrate degradation; glycolysis; D-glyceraldehyde 3-phosphate and glycerone phosphate from D-glucose: step 2/4. Its function is as follows. Catalyzes the reversible isomerization of glucose-6-phosphate to fructose-6-phosphate. The chain is Glucose-6-phosphate isomerase from Mycobacterium ulcerans (strain Agy99).